Consider the following 415-residue polypeptide: AP-3 complex subunit mu (415 aa).

Positions 178 to 414 (SNEVYVDLVE…QTRAGEFDVR (237 aa)) constitute an MHD domain.

Belongs to the adaptor complexes medium subunit family. In terms of assembly, adaptor protein complex 3 (AP-3) is a heterotetramer composed of two large adaptins (delta-type subunit and beta-type subunit), a medium adaptin (mu-type subunit) and a small adaptin (sigma-type subunit).

It is found in the cytoplasm. It localises to the golgi apparatus. The protein localises to the cytoplasmic vesicle membrane. In terms of biological role, part of the AP-3 complex, an adaptor-related complex which seems to be clathrin-associated. The complex is associated with the Golgi region as well as more peripheral structures. It facilitates the budding of vesicles from the Golgi membrane and may be directly involved in trafficking to the vacuole. It also functions in maintaining the identity of lytic vacuoles and in regulating the transition between storage and lytic vacuoles. The sequence is that of AP-3 complex subunit mu (AP3M) from Arabidopsis thaliana (Mouse-ear cress).